Consider the following 472-residue polypeptide: Na(+)/H(+) antiporter NhaA (472 aa).

11 helical membrane-spanning segments follow: residues 48–68, 91–111, 129–149, 157–177, 185–205, 210–230, 237–257, 337–357, 374–394, 410–430, and 443–463; these read AGGIVLMGTTVLTLIAANSAW, MSLHDLINDGLMSLFFLVVGL, ALPVFAAAGGMVVPALVYFAV, AGWGIPMATDIAFAVGILVLL, LIIFLTALAIADDLGAVLVIA, HEISLGAIGFASAVLFLLLLL, HAIPYGVLGVLLWMALHHSGV, GPWVTFIVIPLFALNNVGIDF, VCLGLVFGKFTGISVFSWIAV, LLGVAWLGGIGFTMSLFISQL, and LGILTASLLSAMIGMTWLYFG.

It belongs to the NhaA Na(+)/H(+) (TC 2.A.33) antiporter family.

It is found in the cell inner membrane. It carries out the reaction Na(+)(in) + 2 H(+)(out) = Na(+)(out) + 2 H(+)(in). Na(+)/H(+) antiporter that extrudes sodium in exchange for external protons. The sequence is that of Na(+)/H(+) antiporter NhaA from Syntrophobacter fumaroxidans (strain DSM 10017 / MPOB).